Reading from the N-terminus, the 373-residue chain is Response regulator aspartate phosphatase J (373 aa).

2 TPR repeats span residues 99-135 (YYFY…VEDE) and 146-179 (AEVY…GRRR). The L-glutamyl-L-arginyl-glycyl-L-methionyl-L-threonine site is built by E147, Y150, Q181, D192, Y217, N225, H228, Q260, Y297, K300, and D335. 2 TPR repeats span residues 220-253 (AAAY…FEEH) and 259-292 (VQAV…AAEW). A TPR 5 repeat occupies 334-367 (EDLLHDTAERFNQLEHYESAAFFYRRLMNIKKKL).

The protein belongs to the Rap family. Monomer in solution. Homodimer.

Its subcellular location is the cytoplasm. Its activity is regulated as follows. Inhibited in vitro by the competence and sporulation stimulating factor (CSF), encoded by phrC. However, CSF has at least three targets (RapB, RapC, and RapJ) and the physiological importance of RapJ inhibition by CSF is unknown. Interaction with CSF induces a conformational change in RapJ. Functionally, involved in the regulation of sporulation. Acts as a phosphatase that specifically dephosphorylates the sporulation initiation phosphotransferase Spo0F and inhibits its activity. In Bacillus subtilis (strain 168), this protein is Response regulator aspartate phosphatase J (rapJ).